Reading from the N-terminus, the 430-residue chain is Serine hydroxymethyltransferase (430 aa).

Residues leucine 123 and 127–129 (GHL) each bind (6S)-5,6,7,8-tetrahydrofolate. Lysine 232 is modified (N6-(pyridoxal phosphate)lysine). Position 248 (glutamate 248) interacts with (6S)-5,6,7,8-tetrahydrofolate.

This sequence belongs to the SHMT family. As to quaternary structure, homodimer. Pyridoxal 5'-phosphate serves as cofactor.

Its subcellular location is the cytoplasm. It carries out the reaction (6R)-5,10-methylene-5,6,7,8-tetrahydrofolate + glycine + H2O = (6S)-5,6,7,8-tetrahydrofolate + L-serine. The protein operates within one-carbon metabolism; tetrahydrofolate interconversion. Its pathway is amino-acid biosynthesis; glycine biosynthesis; glycine from L-serine: step 1/1. Its function is as follows. Catalyzes the reversible interconversion of serine and glycine with tetrahydrofolate (THF) serving as the one-carbon carrier. This reaction serves as the major source of one-carbon groups required for the biosynthesis of purines, thymidylate, methionine, and other important biomolecules. Also exhibits THF-independent aldolase activity toward beta-hydroxyamino acids, producing glycine and aldehydes, via a retro-aldol mechanism. The protein is Serine hydroxymethyltransferase of Anaplasma marginale (strain Florida).